Consider the following 1154-residue polypeptide: PAN2-PAN3 deadenylation complex catalytic subunit pan2 (1154 aa).

WD repeat units follow at residues 20-59, 102-145, and 276-315; these read GLPT…RYTS, THDE…DKLR, and ATVS…HFNE. Residues 316–451 form a linker region; that stretch reads MSKEVEFADV…GARISGESED (136 aa). Positions 452–821 constitute a USP domain; that stretch reads DPLLKYSNVE…SPCVLAFQVR (370 aa). The Exonuclease domain occupies 870–1048; that stretch reads VALDTEFVDL…IEDARMALRL (179 aa). 4 residues coordinate a divalent metal cation: aspartate 873, glutamate 875, aspartate 982, and aspartate 1041. The disordered stretch occupies residues 1092 to 1154; the sequence is PGTAVTMQNN…GEFFTGSPLK (63 aa). Polar residues-rich tracts occupy residues 1096–1109 and 1132–1141; these read VTMQ…TPST and LTPSNGTFSG.

The protein belongs to the peptidase C19 family. PAN2 subfamily. Forms a heterotrimer with an asymmetric homodimer of the regulatory subunit pan3 to form the poly(A)-nuclease (PAN) deadenylation complex. Requires a divalent metal cation as cofactor.

It is found in the cytoplasm. It carries out the reaction Exonucleolytic cleavage of poly(A) to 5'-AMP.. With respect to regulation, positively regulated by the regulatory subunit pan3. Catalytic subunit of the poly(A)-nuclease (PAN) deadenylation complex, one of two cytoplasmic mRNA deadenylases involved in mRNA turnover. PAN specifically shortens poly(A) tails of RNA and the activity is stimulated by poly(A)-binding protein pab1. PAN deadenylation is followed by rapid degradation of the shortened mRNA tails by the CCR4-NOT complex. Deadenylated mRNAs are then degraded by two alternative mechanisms, namely exosome-mediated 3'-5' exonucleolytic degradation, or deadenylation-dependent mRNA decaping and subsequent 5'-3' exonucleolytic degradation by xrn1. May also be involved in post-transcriptional maturation of mRNA poly(A) tails. The chain is PAN2-PAN3 deadenylation complex catalytic subunit pan2 from Emericella nidulans (strain FGSC A4 / ATCC 38163 / CBS 112.46 / NRRL 194 / M139) (Aspergillus nidulans).